Consider the following 182-residue polypeptide: UPF0316 protein BCB4264_A3368 (182 aa).

The next 3 helical transmembrane spans lie at 6 to 26, 32 to 52, and 58 to 78; these read LIFV…ILLV, SAAG…GIVF, and WMNI…GGYI.

This sequence belongs to the UPF0316 family.

The protein localises to the cell membrane. This Bacillus cereus (strain B4264) protein is UPF0316 protein BCB4264_A3368.